The sequence spans 187 residues: Putative protein 2 (187 aa).

Transmembrane regions (helical) follow at residues 10–27 (MLAA…NVGV) and 99–121 (VTII…LLLV).

It belongs to the TMEM9 family.

It localises to the membrane. This is Putative protein 2 from Takifugu rubripes (Japanese pufferfish).